A 104-amino-acid polypeptide reads, in one-letter code: Co-chaperonin GroES (104 aa).

This sequence belongs to the GroES chaperonin family. Heptamer of 7 subunits arranged in a ring. Interacts with the chaperonin GroEL.

The protein localises to the cytoplasm. Together with the chaperonin GroEL, plays an essential role in assisting protein folding. The GroEL-GroES system forms a nano-cage that allows encapsulation of the non-native substrate proteins and provides a physical environment optimized to promote and accelerate protein folding. GroES binds to the apical surface of the GroEL ring, thereby capping the opening of the GroEL channel. The chain is Co-chaperonin GroES from Acidiphilium cryptum (strain JF-5).